We begin with the raw amino-acid sequence, 180 residues long: ATP-dependent protease subunit HslV (180 aa).

The active site involves threonine 8. Na(+) is bound by residues alanine 165, cysteine 168, and threonine 171.

This sequence belongs to the peptidase T1B family. HslV subfamily. As to quaternary structure, a double ring-shaped homohexamer of HslV is capped on each side by a ring-shaped HslU homohexamer. The assembly of the HslU/HslV complex is dependent on binding of ATP.

It is found in the cytoplasm. It carries out the reaction ATP-dependent cleavage of peptide bonds with broad specificity.. Allosterically activated by HslU binding. In terms of biological role, protease subunit of a proteasome-like degradation complex believed to be a general protein degrading machinery. This Macrococcus caseolyticus (strain JCSC5402) (Macrococcoides caseolyticum) protein is ATP-dependent protease subunit HslV.